The sequence spans 376 residues: Lipoprotein p33 (376 aa).

Positions 1-30 are cleaved as a signal peptide; it reads MKIKKIKLLKALALTGAFGIVATVPVIVSS. Residue C31 is the site of N-palmitoyl cysteine attachment. C31 carries the S-diacylglycerol cysteine lipid modification. Positions 33-59 are disordered; that stretch reads STDNNGGTGDNNTGGGGSGTDQQQGTT. The span at 38–51 shows a compositional bias: gly residues; the sequence is GGTGDNNTGGGGSG.

Belongs to the p35 lipoprotein family.

Its subcellular location is the cell membrane. This chain is Lipoprotein p33, found in Malacoplasma penetrans (strain HF-2) (Mycoplasma penetrans).